Consider the following 1863-residue polypeptide: Breast cancer type 1 susceptibility protein (1863 aa).

M1 is modified (N-acetylmethionine). The RING-type zinc finger occupies 24 to 65 (CPICLELIKEPVSTKCDHIFCKFCMLKLLNQKKGPSQCPLCK). K109 participates in a covalent cross-link: Glycyl lysine isopeptide (Lys-Gly) (interchain with G-Cter in SUMO2). S114 carries the post-translational modification Phosphoserine. Residues 230–270 (ETDVTNTEHHQPSNNDLNTTEKRAAERHPEKYQGSSVSNLH) are disordered. Residues 248 to 260 (TTEKRAAERHPEK) show a composition bias toward basic and acidic residues. K301 participates in a covalent cross-link: Glycyl lysine isopeptide (Lys-Gly) (interchain with G-Cter in SUMO2). The segment at 306-338 (NKSKQPGLARSQHNRWAGSKETCNDRRTPSTEK) is disordered. The segment covering 327-338 (TCNDRRTPSTEK) has biased composition (basic and acidic residues). K339 is covalently cross-linked (Glycyl lysine isopeptide (Lys-Gly) (interchain with G-Cter in SUMO2)). Residues S395, S398, S423, and S434 each carry the phosphoserine modification. Glycyl lysine isopeptide (Lys-Gly) (interchain with G-Cter in SUMO2) cross-links involve residues K443, K459, and K519. Residues 534-544 (QGTNQTEQNGQ) show a composition bias toward low complexity. The interval 534–570 (QGTNQTEQNGQVMNITNSGHENKTKGDSIQNEKNPNP) is disordered. Phosphoserine is present on S551. Glycyl lysine isopeptide (Lys-Gly) (interchain with G-Cter in SUMO2) cross-links involve residues K583 and K654. The tract at residues 654–709 (KYNQMPVRHSRNLQLMEGKEPATGAKKSNKPNEQTSKRHDSDTFPELKLTNAPGSF) is disordered. Residues S694, S708, and S725 each carry the phosphoserine modification. Residues K734 and K739 each participate in a glycyl lysine isopeptide (Lys-Gly) (interchain with G-Cter in SUMO2) cross-link. 2 positions are modified to phosphoserine: S753 and S840. Glycyl lysine isopeptide (Lys-Gly) (interchain with G-Cter in SUMO2) cross-links involve residues K918 and K987. S988 is subject to Phosphoserine; by CHEK2. At S1009 the chain carries Phosphoserine. K1079 is covalently cross-linked (Glycyl lysine isopeptide (Lys-Gly) (interchain with G-Cter in SUMO2)). S1143 bears the Phosphoserine; by ATR; in vitro mark. Positions 1181 to 1216 (VQKGELSRSPSPFTHTHLAQGYRRGAKKLESSEENL) are disordered. Phosphoserine occurs at positions 1189, 1191, 1211, 1217, and 1218. A Phosphoserine; by ATR; in vitro modification is found at S1280. The disordered stretch occupies residues 1322-1387 (KQMRHQSESQ…VSEDCSGLSS (66 aa)). Phosphoserine is present on residues S1328, S1336, and S1342. Positions 1373 to 1387 (ESETSVSEDCSGLSS) are enriched in polar residues. S1387 is modified (phosphoserine; by ATM and ATR). At T1394 the chain carries Phosphothreonine; by ATR; in vitro. Residues 1397-1424 (RDTMQHNLIKLQQEMAELEAVLEQHGSQ) are interaction with PALB2. The residue at position 1423 (S1423) is a Phosphoserine; by ATM and ATR. Residues 1440-1505 (EDLRNPEQST…SSPSKCPSLD (66 aa)) are disordered. Residues 1445-1470 (PEQSTSEKAVLTSQKSSEYPISQNPE) show a composition bias toward polar residues. S1457 is subject to Phosphoserine; by ATR; in vitro. S1524 bears the Phosphoserine; by ATM mark. S1542 is subject to Phosphoserine. The disordered stretch occupies residues 1565–1596 (ESGISLFSDDPESDPSEDRAPESARVGNIPSS). 2 BRCT domains span residues 1642-1736 (STER…DFEV) and 1756-1855 (QDRK…TYLI).

Heterodimer with BARD1. Part of the BRCA1-associated genome surveillance complex (BASC), which contains BRCA1, MSH2, MSH6, MLH1, ATM, BLM, PMS2 and the MRE11-RAD50-NBN protein (MRN) complex. This association could be a dynamic process changing throughout the cell cycle and within subnuclear domains. Component of the BRCA1-A complex, at least composed of BRCA1, BARD1, UIMC1/RAP80, ABRAXAS1, BRCC3/BRCC36, BABAM2 and BABAM1/NBA1. Interacts (via the BRCT domains) with ABRAXAS1 (phosphorylated form); this is important for recruitment to sites of DNA damage. Can form a heterotetramer with two molecules of ABRAXAS1 (phosphorylated form). Component of the BRCA1-RBBP8 complex. Interacts (via the BRCT domains) with RBBP8 ('Ser-327' phosphorylated form); the interaction ubiquitinates RBBP8, regulates CHEK1 activation, and involves RBBP8 in BRCA1-dependent G2/M checkpoint control on DNA damage. Associates with RNA polymerase II holoenzyme. Interacts with SMC1A, NELFB, DCLRE1C, CLSPN. Interacts with CHEK1, CHEK2, BAP1, BRCC3, UBXN1 and PCLAF. Interacts (via BRCT domains) with BRIP1 (phosphorylated form). Interacts with FANCD2 (ubiquitinated form). Interacts with H2AX (phosphorylated on 'Ser-140'). Interacts (via the BRCT domains) with ACACA (phosphorylated form); the interaction prevents dephosphorylation of ACACA. Part of a BRCA complex containing BRCA1, BRCA2 and PALB2. Interacts directly with PALB2; the interaction is essential for its function in HRR. Interacts directly with BRCA2; the interaction occurs only in the presence of PALB2 which serves as the bridging protein. Interacts (via the BRCT domains) with LMO4; the interaction represses the transcriptional activity of BRCA1. Interacts (via the BRCT domains) with CCAR2 (via N-terminus); the interaction represses the transcriptional activator activity of BRCA1. Interacts with EXD2. Interacts (via C-terminus) with DHX9; this interaction is direct and links BRCA1 to the RNA polymerase II holoenzyme. Interacts with DNA helicase ZGRF1; the interaction is increased following DNA damage induction. In terms of processing, phosphorylated in response to IR, UV, and various stimuli that cause checkpoint activation, probably by ATM or ATR. Phosphorylation at Ser-988 by CHEK2 regulates mitotic spindle assembly. Phosphorylation by AURKA regulates centrosomal microtubule nucleation. Autoubiquitinated, undergoes 'Lys-6'-linked polyubiquitination. 'Lys-6'-linked polyubiquitination does not promote degradation. As to expression, isoform 1 and isoform 3 are widely expressed. Isoform 3 is reduced or absent in several breast and ovarian cancer cell lines.

It localises to the nucleus. Its subcellular location is the chromosome. The protein localises to the cytoplasm. The catalysed reaction is S-ubiquitinyl-[E2 ubiquitin-conjugating enzyme]-L-cysteine + [acceptor protein]-L-lysine = [E2 ubiquitin-conjugating enzyme]-L-cysteine + N(6)-ubiquitinyl-[acceptor protein]-L-lysine.. It participates in protein modification; protein ubiquitination. Its activity is regulated as follows. The E3 ubiquitin-protein ligase activity is inhibited by phosphorylation by AURKA. Activity is increased by phosphatase treatment. Functionally, E3 ubiquitin-protein ligase that specifically mediates the formation of 'Lys-6'-linked polyubiquitin chains and plays a central role in DNA repair by facilitating cellular responses to DNA damage. It is unclear whether it also mediates the formation of other types of polyubiquitin chains. The BRCA1-BARD1 heterodimer coordinates a diverse range of cellular pathways such as DNA damage repair, ubiquitination and transcriptional regulation to maintain genomic stability. Regulates centrosomal microtubule nucleation. Required for appropriate cell cycle arrests after ionizing irradiation in both the S-phase and the G2 phase of the cell cycle. Required for FANCD2 targeting to sites of DNA damage. Inhibits lipid synthesis by binding to inactive phosphorylated ACACA and preventing its dephosphorylation. Contributes to homologous recombination repair (HRR) via its direct interaction with PALB2, fine-tunes recombinational repair partly through its modulatory role in the PALB2-dependent loading of BRCA2-RAD51 repair machinery at DNA breaks. Component of the BRCA1-RBBP8 complex which regulates CHEK1 activation and controls cell cycle G2/M checkpoints on DNA damage via BRCA1-mediated ubiquitination of RBBP8. Acts as a transcriptional activator. This chain is Breast cancer type 1 susceptibility protein (BRCA1), found in Homo sapiens (Human).